Reading from the N-terminus, the 3081-residue chain is MASEVIALCHSFEQELAKSLNVLPPVSASKPDAHDAHLNHHRLSQRIAESVSYYAGRLPAYASVPRILVFGDKLFRAEQYQLALQACYKHIRGLELHSSRENLPRMDAQARLSSHVQACFGCAACEAALLLASDGSVKHPDTLQWLVSCLAQLRAAMSLALPDERLYWLVLNGTVHVYGIAKAMITAGFAEQALPALVFCIKALEGHVAFAAPKYLPWRTQLYTWAVYGLADCGAVEQARALLADGLKRLEMLVALQKLDPVPAAPAVQAAFAAARGALVGLQLRVEMAAGAAVTPVLAQLSAGAAGAGAVGAAGPTARAGLAALVEALHVPHRRVVRTEAVSGGPLKELFDAAMAVAAPLIGDLKKATEAAAAADAAAAAAAVAADAASAEAETAGGADAAAPADTGAQQQASAAAAAADEAAVAASAALGAAQEALPCALHKGLLCAAYNLEQWKQFEELASLATSRSDVVYADAVPTGTGSTTTTAAAAADVDQTAAQLGTAASILTALRQLSTAPGVESLRTLAAMLQQALSRGITVSGTAGAAPPPPPRRVSMTGMLAGGSASPPNGSSGAGGAAATLTATAAGITQTAGSPSHNGGAAGATASAGGGAAGAPPRPQQSSLAPWQQLRDLIADASLALYGSARPLIDGVFCADDKEAGLVAELLAACHSAWAAVELDDGELRVAAALKLALLLEEEGRLLAAREVLMQAKSVVEQSRVELMVANRRAPDEHLRWVTASRSQPSDDTAALVQGMTASEQELACLQVDVLALLARVELGLGVSEQQGRATARRTAVMEEQAKRTAQSSIFGQRNAAELARDEARLVAAGATPPNPQMKERELLTACAKNPYERAVVLMQMTSFQGADAGRKTQLLQEAGDLLVKAQAAEDGLFAAQQPDLRARRDVPPQPKLLQRSPTSVTLVAHPPGPGLKQPPGARKPPSRYVAYCKSFGAGVGLSINKTATEYPGSGVSVPLGQPVTIQVALPCTLPQLRAPFLEEQVARLKSARLLVLGMEVAALLPDEPLMQEGALRTYGLLAPLLALRAPRSHLLHKALAACHAVLASLTNLVQDSLYRQEHQRSLAARVAAAVTYQLLRLSDEAGEVGAAAHFGRLQLELLKAYDPRFALAGRPALLPGAELQEEASQLHDVLLQHPKLSEWAPEPLVERQKDASDLVARVLPVLGTPAPMDTWSQALGFETAAEHPRWVELVVRMVEAAVRKGNPGNATVVAEQLTWWVRARLRRPPPPPLDAYEAEAAEAAAAGGTAPPWPAKWKLEEAAAALDAATVAASFEPPPVPSTEGMSPEEASAALARHAAVAAAAEATARQRLAAVLLLQKRMPALLARKRLIEKMRENRKRWSPWMARLNLVLGLQAAADARRYAANAPARARAAAAAAEAAAAAADAPGPETSGVAGSRPGTAAVNMPPPVPDPSAAGPPPLTPPEGITPPLQAMMHFARAAHLAARGGAWVEVGNAARHAWNLARATLSADPALTAPLPPVRWERGDAPQPAVAPESILVPAGAGDAGGKKGSKKGGKDDKKKDDKAPAKTPSSPKGGARSSARSKKGFPVEEAPPPPRTYPVVVGARPNMQRAARSLADAVLELVSALRDGLQVYTWVAPVNPRHRFDGPPPRRAALAASASTAGAGLGEEERPVTARVTDSEFSYGSDLQADIWFKEGPLDLAWVSRFLGLAAVVLSRGERWHALVEAGRQWARLSEGAFNERIMPWLLQAAPKAGVDPAPFQSAMDALIRDKNQALDQLDKVRTLVRERLGDTPLMAQSMGHKVRKRKTRAAILAAGPGSGAGGGGGSGLPDSDRASLVSAAYTYRTASTYKTKASQPDFLRIPGEYEKVIEVLKRRNEKGAMLLALHELGDVHAHFGNWGGAATSWNDTLDTLLGPYQALRNWRGRLDGMSPAGTLQAYGLHGLLLGCVLAGKLARYVHHDHLHLRLEAHRLTARLAFCAFSAHLGHPQRRAGFATYTPRELWAAGTDAWLVWSDPYRCPVVDLAGALEGAAAALLDAGLALEALPVLALWEHVTRHVLRNLHGTVLCRLLRVRALVALGLLAEAVEVTGGLMGAAALPDPTLDSDYVLKDTSGAVVEPVPAPPYDNSKLPGEPGNKAALTHIADTPLAPAVEKLYGSWLVAHLALARAQVLMLAGSVPNQWRGVDWRTGERTAAPKPASPAKGAAKGAAAAAPEPPGAGLPEPVEPVMLERAHVLLRKALAMASGEDQPPSEEPSSAGKPAAAGKPAPARAPSPGRAKSPTGKGKGKGGAGDGAGSAAAAPPEVPGPPPPPPPSASQRAEVNVRALLLMSELEQLRWMPSRGLAHALEAARFLGEHADHVNTPQQTDNDELERYTLAPALWFLARGAAVRCAAALGHAAHVHELVAAATSAHAPSEPGSAKVPSGLPELLHCTGMAHVAALTLAAEGRTSDALAALAAVAARYRSLCVYDGRLAAVLLDAAALRDRLGLREDAAELTAQGLAVAEGYCLELGLGEALEAPELTNVYLDGTALYAHALGAAAVHASRRQQHAEAERCAARAVLLLRSHTRALPATHAAALLLLGRTCRMVALCGDGVPVDGQPTLASGAPPASTATLTSAGAGAPGDPAATAVAAGTARAAAGGFNASAGALARTATAGRGGGSAGSSGGGVAATAAKLSAARSALCASITLAAVDGGHLRSLMRGALLELGSIFIAGLDARSAAACLRAGHAAAAKADLVALSSHTLAPVAAAQLPDWALAHVRGQEALFGKKSSNGAISGAAGAAGSARPVATSSSGARPPGTPPGGKPGAGGGSGDGLSDADAARMVFCLLGGLLKGLEALPVGGGARARGEAQVAALHAALRAACAKYGTDACFAEPPLPPSPPDAVPPPPEGSVIVQWHCQDGCWQEARSWRAEGSSGAPDGPLSDSALLALQPVPAYASLLFVVAAPSHDGSPGPHCGEVTFAVKDVRELQRRAKALRARVEAPKAATDILGYAAPSQVELGELLRAAERLLSAVPRNSEDGSSSAGFSAADSGLGGFGSSELMEGEVRPELDVAFLCKLEALLALEAGLDVNDKTLGSWLVQTLPVMM.

Disordered regions lie at residues Ser542 to Ala579, Thr591 to Leu626, Pro910 to Lys942, Ala1406 to Pro1451, Glu1518 to Val1586, Arg1636 to Pro1657, Gly2176 to Pro2210, Met2229 to Ala2306, and Ala2776 to Gly2806. Residues Gly564 to Ala579 show a composition bias toward low complexity. A compositionally biased stretch (pro residues) spans Met1428–Ile1449. The segment covering Gly1538–Pro1550 has biased composition (basic and acidic residues). Composition is skewed to low complexity over residues Ala1638–Gly1648, Ala2181–Ala2199, and Glu2240–Gly2269. The span at Pro2289–Ser2301 shows a compositional bias: pro residues. The segment covering Ala2776–Pro2788 has biased composition (low complexity). Residues Lys2796–Asp2805 are compositionally biased toward gly residues.

The protein belongs to the CFAP54 family. Part of the PDCP1 complex composed of CFAP46, CFAP54, CFAP74 and CFAP221; the PDCP1 complex binds calmodulin.

The protein resides in the cytoplasm. It localises to the cytoskeleton. The protein localises to the cilium axoneme. The chain is Cilia- and flagella-associated protein 54 from Chlamydomonas reinhardtii (Chlamydomonas smithii).